A 323-amino-acid chain; its full sequence is Vertebrate ancient opsin (323 aa).

At Met-1 to Asn-38 the chain is on the extracellular side. A helical membrane pass occupies residues Phe-39 to Ala-63. Residues Thr-64 to Asn-75 are Cytoplasmic-facing. Residues Tyr-76 to Asn-100 traverse the membrane as a helical segment. Residues Ala-101–Glu-115 are Extracellular-facing. A disulfide bridge connects residues Cys-112 and Cys-189. The chain crosses the membrane as a helical span at residues Gly-116–Phe-135. The Cytoplasmic portion of the chain corresponds to Glu-136–His-154. The chain crosses the membrane as a helical span at residues Ala-155–Cys-178. Topologically, residues Ser-179–Thr-202 are extracellular. The N-linked (GlcNAc...) asparagine glycan is linked to Asn-200. A helical transmembrane segment spans residues Tyr-203–Leu-230. At Arg-231–Arg-250 the chain is on the cytoplasmic side. Residues Met-251–Thr-274 form a helical membrane-spanning segment. At Ala-275–Asp-282 the chain is on the extracellular side. Residues Pro-283–Met-307 traverse the membrane as a helical segment. Position 294 is an N6-(retinylidene)lysine (Lys-294). The Cytoplasmic segment spans residues Asn-308 to Ala-323.

It belongs to the G-protein coupled receptor 1 family. Opsin subfamily. Post-translationally, phosphorylated on some or all of the serine and threonine residues present in the C-terminal region.

Its subcellular location is the membrane. The protein is Vertebrate ancient opsin of Salmo salar (Atlantic salmon).